The primary structure comprises 414 residues: MIOREX complex component 10 (414 aa).

The transit peptide at 1–29 (MLSFRSLTSTFGFVSRFQIRRLGTSLSIQ) directs the protein to the mitochondrion. Residues 30-373 (NLEVQDGRWK…ISLLNERNST (344 aa)) are Mitochondrial matrix-facing. Residues 374 to 394 (FLEWIIIYLIAFELCFEIYHF) traverse the membrane as a helical segment. The Mitochondrial intermembrane segment spans residues 395 to 414 (YQKYSSYCSEPTNDDLDATK).

It belongs to the RMD1/sif2 family. Associates with the mitochondrial ribosome.

It is found in the mitochondrion inner membrane. In terms of biological role, component of MIOREX complexes, large expressome-like assemblies of ribosomes with factors involved in all the steps of post-transcriptional gene expression. This is MIOREX complex component 10 from Saccharomyces cerevisiae (strain ATCC 204508 / S288c) (Baker's yeast).